Reading from the N-terminus, the 357-residue chain is Histidinol-phosphate aminotransferase (357 aa).

Lysine 218 carries the N6-(pyridoxal phosphate)lysine modification.

This sequence belongs to the class-II pyridoxal-phosphate-dependent aminotransferase family. Histidinol-phosphate aminotransferase subfamily. As to quaternary structure, homodimer. Pyridoxal 5'-phosphate is required as a cofactor.

The catalysed reaction is L-histidinol phosphate + 2-oxoglutarate = 3-(imidazol-4-yl)-2-oxopropyl phosphate + L-glutamate. Its pathway is amino-acid biosynthesis; L-histidine biosynthesis; L-histidine from 5-phospho-alpha-D-ribose 1-diphosphate: step 7/9. The chain is Histidinol-phosphate aminotransferase from Chlorobium luteolum (strain DSM 273 / BCRC 81028 / 2530) (Pelodictyon luteolum).